The chain runs to 157 residues: 2-C-methyl-D-erythritol 2,4-cyclodiphosphate synthase (157 aa).

2 residues coordinate a divalent metal cation: D8 and H10. 4-CDP-2-C-methyl-D-erythritol 2-phosphate contacts are provided by residues 8 to 10 and 34 to 35; these read DVH and HS. H42 contributes to the a divalent metal cation binding site. 4-CDP-2-C-methyl-D-erythritol 2-phosphate contacts are provided by residues 56–58, 132–135, and R142; these read DIG and TTNE.

The protein belongs to the IspF family. In terms of assembly, homotrimer. Requires a divalent metal cation as cofactor.

The enzyme catalyses 4-CDP-2-C-methyl-D-erythritol 2-phosphate = 2-C-methyl-D-erythritol 2,4-cyclic diphosphate + CMP. The protein operates within isoprenoid biosynthesis; isopentenyl diphosphate biosynthesis via DXP pathway; isopentenyl diphosphate from 1-deoxy-D-xylulose 5-phosphate: step 4/6. Its function is as follows. Involved in the biosynthesis of isopentenyl diphosphate (IPP) and dimethylallyl diphosphate (DMAPP), two major building blocks of isoprenoid compounds. Catalyzes the conversion of 4-diphosphocytidyl-2-C-methyl-D-erythritol 2-phosphate (CDP-ME2P) to 2-C-methyl-D-erythritol 2,4-cyclodiphosphate (ME-CPP) with a corresponding release of cytidine 5-monophosphate (CMP). The sequence is that of 2-C-methyl-D-erythritol 2,4-cyclodiphosphate synthase from Pelodictyon phaeoclathratiforme (strain DSM 5477 / BU-1).